Here is a 130-residue protein sequence, read N- to C-terminus: Small ribosomal subunit protein uS9 (130 aa).

The protein belongs to the universal ribosomal protein uS9 family.

The polypeptide is Small ribosomal subunit protein uS9 (Burkholderia cenocepacia (strain HI2424)).